Consider the following 164-residue polypeptide: Endoribonuclease YbeY (164 aa).

3 residues coordinate Zn(2+): H111, H115, and H121. A disordered region spans residues 140–164 (ELGHPDPYADDDAQKHSTVTIKDSE). Residues 155-164 (HSTVTIKDSE) are compositionally biased toward polar residues.

This sequence belongs to the endoribonuclease YbeY family. Requires Zn(2+) as cofactor.

It localises to the cytoplasm. In terms of biological role, single strand-specific metallo-endoribonuclease involved in late-stage 70S ribosome quality control and in maturation of the 3' terminus of the 16S rRNA. This Pseudomonas fluorescens (strain SBW25) protein is Endoribonuclease YbeY.